The sequence spans 631 residues: Probable methyltransferase PMT16 (631 aa).

Topologically, residues 1–14 (MNLFTRISSRTKKA) are cytoplasmic. The helical; Signal-anchor for type II membrane protein transmembrane segment at 15–35 (NLYYVTLVALLCIASYLLGIW) threads the bilayer. Over 36 to 631 (QNTAVNPRAA…EDKNNTSALS (596 aa)) the chain is Lumenal. Residues N61, N230, and N626 are each glycosylated (N-linked (GlcNAc...) asparagine).

It belongs to the methyltransferase superfamily.

It localises to the endoplasmic reticulum membrane. The polypeptide is Probable methyltransferase PMT16 (Arabidopsis thaliana (Mouse-ear cress)).